We begin with the raw amino-acid sequence, 207 residues long: Holliday junction branch migration complex subunit RuvA (207 aa).

Residues 1–64 are domain I; sequence MIGRLTGILA…ETSQQLFGFS (64 aa). Residues 65–142 are domain II; that stretch reads SQQDRELFRM…ALDTTPSEHS (78 aa). The interval 143-157 is flexible linker; it reads PTGEGAGIVRVDPVI. The tract at residues 158 to 207 is domain III; it reads NTNVIIADAESALIGLGYKPTEAAKAVSAAYNDTITTSEDLIRAALKGMI.

Belongs to the RuvA family. In terms of assembly, homotetramer. Forms an RuvA(8)-RuvB(12)-Holliday junction (HJ) complex. HJ DNA is sandwiched between 2 RuvA tetramers; dsDNA enters through RuvA and exits via RuvB. An RuvB hexamer assembles on each DNA strand where it exits the tetramer. Each RuvB hexamer is contacted by two RuvA subunits (via domain III) on 2 adjacent RuvB subunits; this complex drives branch migration. In the full resolvosome a probable DNA-RuvA(4)-RuvB(12)-RuvC(2) complex forms which resolves the HJ.

It is found in the cytoplasm. The RuvA-RuvB-RuvC complex processes Holliday junction (HJ) DNA during genetic recombination and DNA repair, while the RuvA-RuvB complex plays an important role in the rescue of blocked DNA replication forks via replication fork reversal (RFR). RuvA specifically binds to HJ cruciform DNA, conferring on it an open structure. The RuvB hexamer acts as an ATP-dependent pump, pulling dsDNA into and through the RuvAB complex. HJ branch migration allows RuvC to scan DNA until it finds its consensus sequence, where it cleaves and resolves the cruciform DNA. The polypeptide is Holliday junction branch migration complex subunit RuvA (Saccharophagus degradans (strain 2-40 / ATCC 43961 / DSM 17024)).